The primary structure comprises 43 residues: uncharacterized protein (43 aa).

This is an uncharacterized protein from Rickettsia prowazekii (strain Madrid E).